A 421-amino-acid chain; its full sequence is Serine hydroxymethyltransferase (421 aa).

(6S)-5,6,7,8-tetrahydrofolate contacts are provided by residues Leu123 and Gly127–Leu129. N6-(pyridoxal phosphate)lysine is present on Lys232.

This sequence belongs to the SHMT family. In terms of assembly, homodimer. Requires pyridoxal 5'-phosphate as cofactor.

It is found in the cytoplasm. It carries out the reaction (6R)-5,10-methylene-5,6,7,8-tetrahydrofolate + glycine + H2O = (6S)-5,6,7,8-tetrahydrofolate + L-serine. Its pathway is one-carbon metabolism; tetrahydrofolate interconversion. The protein operates within amino-acid biosynthesis; glycine biosynthesis; glycine from L-serine: step 1/1. Functionally, catalyzes the reversible interconversion of serine and glycine with tetrahydrofolate (THF) serving as the one-carbon carrier. This reaction serves as the major source of one-carbon groups required for the biosynthesis of purines, thymidylate, methionine, and other important biomolecules. Also exhibits THF-independent aldolase activity toward beta-hydroxyamino acids, producing glycine and aldehydes, via a retro-aldol mechanism. This chain is Serine hydroxymethyltransferase, found in Ehrlichia canis (strain Jake).